A 346-amino-acid chain; its full sequence is E3 ubiquitin-protein ligase RNF146-A (346 aa).

The RING-type zinc-finger motif lies at 37-75 (CAICLQTCVHPVSLPCKHVFCYLCVKGASWLGKRCALCR). The 77-residue stretch at 91-167 (PELKAASRGN…EHGRRRKIKR (77 aa)) folds into the WWE domain. Disordered stretches follow at residues 195-240 (SSAD…GTSL) and 256-301 (ERSH…ALVA). Residues 202-216 (SVPAQSGASVQSSSV) show a composition bias toward low complexity. Acidic residues predominate over residues 281-295 (SIEETESDASSDSED).

In terms of assembly, interacts with poly-ADP-ribosylated AXIN1, AXIN2, BLZF1 and CASC3. Post-translationally, ubiquitinated; autoubiquitinated. Autoubiquitination is enhanced upon poly(ADP-ribose)-binding.

It is found in the cytoplasm. The protein localises to the cytosol. The catalysed reaction is S-ubiquitinyl-[E2 ubiquitin-conjugating enzyme]-L-cysteine + [acceptor protein]-L-lysine = [E2 ubiquitin-conjugating enzyme]-L-cysteine + N(6)-ubiquitinyl-[acceptor protein]-L-lysine.. It functions in the pathway protein modification; protein ubiquitination. In terms of biological role, E3 ubiquitin-protein ligase that specifically binds poly-ADP-ribosylated proteins and mediates their ubiquitination and subsequent degradation. Acts as an activator of the Wnt signaling pathway by mediating the ubiquitination of poly-ADP-ribosylated AXIN1 and AXIN2, 2 key components of the beta-catenin destruction complex. Acts in cooperation with tankyrase proteins (TNKS and TNKS2), which mediate poly-ADP-ribosylation of target proteins AXIN1, AXIN2, BLZF1, CASC3, TNKS and TNKS2. Recognizes and binds tankyrase-dependent poly-ADP-ribosylated proteins via its WWE domain and mediates their ubiquitination. The sequence is that of E3 ubiquitin-protein ligase RNF146-A (RNF146A) from Bos taurus (Bovine).